The chain runs to 116 residues: Transcription initiation factor IIA subunit 2 (116 aa).

This sequence belongs to the TFIIA subunit 2 family. In terms of assembly, TFIIA is a heterodimer composed of the large TOA1 and the small TOA2 subunits.

It localises to the nucleus. Functionally, TFIIA is a component of the transcription machinery of RNA polymerase II and plays an important role in transcriptional activation. TFIIA in a complex with tbp mediates transcriptional activity. The chain is Transcription initiation factor IIA subunit 2 (TOA2) from Pyricularia oryzae (strain 70-15 / ATCC MYA-4617 / FGSC 8958) (Rice blast fungus).